Here is a 165-residue protein sequence, read N- to C-terminus: Ribosome maturation factor RimM (165 aa).

Positions 94 to 165 (EDEFYIADLN…YVILNYQTKV (72 aa)) constitute a PRC barrel domain.

It belongs to the RimM family. In terms of assembly, binds ribosomal protein uS19.

It is found in the cytoplasm. Functionally, an accessory protein needed during the final step in the assembly of 30S ribosomal subunit, possibly for assembly of the head region. Essential for efficient processing of 16S rRNA. May be needed both before and after RbfA during the maturation of 16S rRNA. It has affinity for free ribosomal 30S subunits but not for 70S ribosomes. The sequence is that of Ribosome maturation factor RimM from Rickettsia prowazekii (strain Madrid E).